The primary structure comprises 173 residues: Protein FAM180A (173 aa).

The signal sequence occupies residues 1 to 17 (MSWKALTILLVFSSTQA).

This sequence belongs to the FAM180 family.

The protein localises to the secreted. The sequence is that of Protein FAM180A (Fam180a) from Mus musculus (Mouse).